The sequence spans 503 residues: Beta-mannosyltransferase 4 (503 aa).

The Cytoplasmic portion of the chain corresponds to methionine 1 to lysine 24. Residues leucine 25–histidine 45 form a helical membrane-spanning segment. Residues glutamine 46 to histidine 503 are Extracellular-facing. An N-linked (GlcNAc...) asparagine glycan is attached at asparagine 468.

Belongs to the BMT family.

Its subcellular location is the membrane. Its function is as follows. Beta-mannosyltransferase involved in cell wall biosynthesis. Responsible for addition of a hexose to the beta-mannose chain. The protein is Beta-mannosyltransferase 4 (BMT4) of Komagataella phaffii (strain ATCC 76273 / CBS 7435 / CECT 11047 / NRRL Y-11430 / Wegner 21-1) (Yeast).